The chain runs to 462 residues: U2 small nuclear ribonucleoprotein auxiliary factor 35 kDa subunit-related protein 2 (462 aa).

A compositionally biased stretch (low complexity) spans 1-13; it reads METAGATADATAG. 3 disordered regions span residues 1–22, 44–66, and 115–138; these read META…RKKY, AELA…EEER, and WEEQ…EREE. Lysine 49 is covalently cross-linked (Glycyl lysine isopeptide (Lys-Gly) (interchain with G-Cter in SUMO2)). Basic and acidic residues predominate over residues 57–66; the sequence is AEEKRLEEER. The C3H1-type 1 zinc finger occupies 170 to 198; that stretch reads EKDRANCPFYSKTGACRFGDRCSRKHNFP. The region spanning 202 to 308 is the RRM domain; sequence PTLLIKGMFT…RQLQCEFCPV (107 aa). A C3H1-type 2 zinc finger spans residues 310–337; the sequence is RWKMAICGLFEVQQCPRGKHCNFLHVFR. Serine 353 is modified (phosphoserine). The tract at residues 354 to 462 is disordered; sequence PDWTSSSFGK…QPQPQPQSDP (109 aa). Basic and acidic residues predominate over residues 364–379; sequence NSERRERASHYDEYYG. Serine 389 is subject to Phosphoserine. Positions 392–403 are enriched in basic and acidic residues; sequence FYKRNGESDRKS. Over residues 404–417 the composition is skewed to basic residues; that stretch reads SSRHRVKKSHRYGM.

Component of the U11/U12 snRNPs that are part of the U12-type spliceosome. Interacts (via RS domain) with SRSF1 and SRSF2. Interacts with U2AF2/U2AF65. In terms of processing, phosphorylated in the RS domain by SRPK1.

The protein localises to the nucleus. Pre-mRNA-binding protein required for splicing of both U2- and U12-type introns. Selectively interacts with the 3'-splice site of U2- and U12-type pre-mRNAs and promotes different steps in U2 and U12 intron splicing. Recruited to U12 pre-mRNAs in an ATP-dependent manner and is required for assembly of the prespliceosome, a precursor to other spliceosomal complexes. For U2-type introns, it is selectively and specifically required for the second step of splicing. The protein is U2 small nuclear ribonucleoprotein auxiliary factor 35 kDa subunit-related protein 2 (Zrsr2) of Mus musculus (Mouse).